Consider the following 603-residue polypeptide: Bifunctional 3-dehydroquinate dehydratase/shikimate dehydrogenase, chloroplastic (603 aa).

The segment covering 1 to 10 has biased composition (polar residues); that stretch reads MAASSTNARL. The segment at 1 to 22 is disordered; the sequence is MAASSTNARLTNPPRLLSKPRL. Residues 1 to 66 constitute a chloroplast transit peptide; that stretch reads MAASSTNARL…VVFSDQRRRR (66 aa). The segment covering 13–22 has biased composition (low complexity); the sequence is PPRLLSKPRL. Positions 96-313 are 3-dehydroquinate dehydratase; it reads ICAPVMADSI…QPTIKDLLDL (218 aa). 3 residues coordinate 3-dehydroshikimate: glutamate 124, arginine 126, and arginine 155. The active-site Proton acceptor; for 3-dehydroquinate dehydratase activity is histidine 214. 4 residues coordinate 3-dehydroshikimate: lysine 241, arginine 279, serine 300, and glutamine 304. The active-site Schiff-base intermediate with substrate; for 3-dehydroquinate dehydratase activity is the lysine 241. The shikimate dehydrogenase stretch occupies residues 328-558; it reads IIGKPVSHSK…VYTPRITRLL (231 aa). Shikimate contacts are provided by serine 336, serine 338, threonine 381, lysine 385, asparagine 406, and aspartate 423. Lysine 385 (for shikimate dehydrogenase activity) is an active-site residue. The active-site For shikimate dehydrogenase activity is aspartate 423. NADP(+)-binding residues include alanine 461, glycine 463, alanine 464, asparagine 483, threonine 485, arginine 488, methionine 525, and alanine 548. Tyrosine 550 is a binding site for shikimate. Glycine 571 contacts NADP(+). Residues glutamine 578 and glutamine 582 each contribute to the shikimate site.

The protein in the N-terminal section; belongs to the type-I 3-dehydroquinase family. It in the C-terminal section; belongs to the shikimate dehydrogenase family. Monomer.

It is found in the plastid. The protein resides in the chloroplast. The enzyme catalyses 3-dehydroquinate = 3-dehydroshikimate + H2O. It carries out the reaction shikimate + NADP(+) = 3-dehydroshikimate + NADPH + H(+). The protein operates within metabolic intermediate biosynthesis; chorismate biosynthesis; chorismate from D-erythrose 4-phosphate and phosphoenolpyruvate: step 3/7. It functions in the pathway metabolic intermediate biosynthesis; chorismate biosynthesis; chorismate from D-erythrose 4-phosphate and phosphoenolpyruvate: step 4/7. Functionally, bifunctional dehydroquinate dehydratase-shikimate dehydrogenase enzyme that catalyzes two steps in the chorismate biosynthesis pathway. In Arabidopsis thaliana (Mouse-ear cress), this protein is Bifunctional 3-dehydroquinate dehydratase/shikimate dehydrogenase, chloroplastic.